A 644-amino-acid chain; its full sequence is Acetyl-coenzyme A synthetase (644 aa).

Residues 189–192 and T307 contribute to the CoA site; that span reads RGGK. Residues 383-385, 407-412, D496, and R511 each bind ATP; these read GEP and DTWWQT. S519 is a binding site for CoA. R522 is a binding site for ATP. Residues V533, H535, and V538 each coordinate Mg(2+). CoA is bound at residue R580. K605 is subject to N6-acetyllysine.

Belongs to the ATP-dependent AMP-binding enzyme family. Requires Mg(2+) as cofactor. Acetylated. Deacetylation by the SIR2-homolog deacetylase activates the enzyme.

The catalysed reaction is acetate + ATP + CoA = acetyl-CoA + AMP + diphosphate. Catalyzes the conversion of acetate into acetyl-CoA (AcCoA), an essential intermediate at the junction of anabolic and catabolic pathways. AcsA undergoes a two-step reaction. In the first half reaction, AcsA combines acetate with ATP to form acetyl-adenylate (AcAMP) intermediate. In the second half reaction, it can then transfer the acetyl group from AcAMP to the sulfhydryl group of CoA, forming the product AcCoA. In Rubrobacter xylanophilus (strain DSM 9941 / JCM 11954 / NBRC 16129 / PRD-1), this protein is Acetyl-coenzyme A synthetase.